Here is a 512-residue protein sequence, read N- to C-terminus: 2-isopropylmalate synthase (512 aa).

The Pyruvate carboxyltransferase domain occupies 4-266 (IEIFDTTLRD…TTKLNLKEIA (263 aa)). Residues aspartate 13, histidine 201, histidine 203, and asparagine 237 each contribute to the Mn(2+) site. Residues 390-512 (QLESVQLAYG…GEPTPVSATI (123 aa)) are regulatory domain.

It belongs to the alpha-IPM synthase/homocitrate synthase family. LeuA type 1 subfamily. In terms of assembly, homodimer. It depends on Mn(2+) as a cofactor.

The protein resides in the cytoplasm. It catalyses the reaction 3-methyl-2-oxobutanoate + acetyl-CoA + H2O = (2S)-2-isopropylmalate + CoA + H(+). It functions in the pathway amino-acid biosynthesis; L-leucine biosynthesis; L-leucine from 3-methyl-2-oxobutanoate: step 1/4. In terms of biological role, catalyzes the condensation of the acetyl group of acetyl-CoA with 3-methyl-2-oxobutanoate (2-ketoisovalerate) to form 3-carboxy-3-hydroxy-4-methylpentanoate (2-isopropylmalate). The polypeptide is 2-isopropylmalate synthase (Brevibacillus brevis (strain 47 / JCM 6285 / NBRC 100599)).